The sequence spans 504 residues: Maturase K (504 aa).

It belongs to the intron maturase 2 family. MatK subfamily.

It localises to the plastid. The protein localises to the chloroplast. Its function is as follows. Usually encoded in the trnK tRNA gene intron. Probably assists in splicing its own and other chloroplast group II introns. The protein is Maturase K of Draba nemorosa (Woodland whitlowgrass).